We begin with the raw amino-acid sequence, 1380 residues long: DNA-directed RNA polymerase subunit beta (1380 aa).

It belongs to the RNA polymerase beta chain family. In terms of assembly, the RNAP catalytic core consists of 2 alpha, 1 beta, 1 beta' and 1 omega subunit. When a sigma factor is associated with the core the holoenzyme is formed, which can initiate transcription.

It carries out the reaction RNA(n) + a ribonucleoside 5'-triphosphate = RNA(n+1) + diphosphate. DNA-dependent RNA polymerase catalyzes the transcription of DNA into RNA using the four ribonucleoside triphosphates as substrates. The polypeptide is DNA-directed RNA polymerase subunit beta (Sinorhizobium medicae (strain WSM419) (Ensifer medicae)).